We begin with the raw amino-acid sequence, 809 residues long: uncharacterized protein (809 aa).

The MHYT domain maps to 19–206 (HDLRLVLVAS…FTGMSAITIV (188 aa)). The next 7 helical transmembrane spans lie at 23–43 (LVLVASAVCLAGCFTTFRLYS), 57–77 (LLLTGLVAGSSVWATHFIAMV), 92–112 (TLLSLMIAALFMASGFAVASA), 122–142 (GGVLIGLGVAAMHYMGMSAFV), 152–172 (ATVGMSAVLGVGGATAALLLA), 186–206 (GMLCLGIVMLHFTGMSAITIV), and 224–244 (TLAVGSITSMIILGGLGAVAI). A PAS domain is found at 254 to 317 (ERIRRLANAA…ADPSREDVRR (64 aa)). Residues 402–536 (ESLAVICIDL…GRGVYRFFKR (135 aa)) form the GGDEF domain. Residues 545–795 (RRNLARDLRQ…ALTMWTTAGD (251 aa)) form the EAL domain.

It is found in the cell membrane. This is an uncharacterized protein from Caulobacter vibrioides (strain ATCC 19089 / CIP 103742 / CB 15) (Caulobacter crescentus).